Here is a 73-residue protein sequence, read N- to C-terminus: Potassium channel toxin alpha-KTx 27.4 (73 aa).

An N-terminal signal peptide occupies residues 1–26 (MKFLFLTLVLLYFTAILVFIVFPSYA).

This sequence belongs to the short scorpion toxin superfamily. Potassium channel inhibitor family. Alpha-KTx 27 subfamily. Post-translationally, contains 4 disulfide bonds. In terms of tissue distribution, expressed by the venom gland.

Its subcellular location is the secreted. In Mesobuthus gibbosus (Mediterranean checkered scorpion), this protein is Potassium channel toxin alpha-KTx 27.4.